The primary structure comprises 160 residues: S-ribosylhomocysteine lyase (160 aa).

Residues His57, His61, and Cys127 each contribute to the Fe cation site.

This sequence belongs to the LuxS family. In terms of assembly, homodimer. It depends on Fe cation as a cofactor.

The enzyme catalyses S-(5-deoxy-D-ribos-5-yl)-L-homocysteine = (S)-4,5-dihydroxypentane-2,3-dione + L-homocysteine. Its function is as follows. Involved in the synthesis of autoinducer 2 (AI-2) which is secreted by bacteria and is used to communicate both the cell density and the metabolic potential of the environment. The regulation of gene expression in response to changes in cell density is called quorum sensing. Catalyzes the transformation of S-ribosylhomocysteine (RHC) to homocysteine (HC) and 4,5-dihydroxy-2,3-pentadione (DPD). The sequence is that of S-ribosylhomocysteine lyase from Streptococcus uberis (strain ATCC BAA-854 / 0140J).